We begin with the raw amino-acid sequence, 121 residues long: Dihydroneopterin aldolase (121 aa).

Substrate is bound by residues Glu22, Tyr54, and 73–74; that span reads LE. The Proton donor/acceptor role is filled by Lys100.

This sequence belongs to the DHNA family. As to quaternary structure, homooctamer. Four molecules assemble into a ring, and two rings come together to give a cylinder with a hole of at least 13 a diameter.

It catalyses the reaction 7,8-dihydroneopterin = 6-hydroxymethyl-7,8-dihydropterin + glycolaldehyde. It carries out the reaction 7,8-dihydroneopterin = 7,8-dihydromonapterin. The protein operates within cofactor biosynthesis; tetrahydrofolate biosynthesis; 2-amino-4-hydroxy-6-hydroxymethyl-7,8-dihydropteridine diphosphate from 7,8-dihydroneopterin triphosphate: step 3/4. Functionally, catalyzes the conversion of 7,8-dihydroneopterin to 6-hydroxymethyl-7,8-dihydropterin. Can also catalyze the epimerization of carbon 2' of dihydroneopterin to dihydromonapterin. This Staphylococcus aureus (strain COL) protein is Dihydroneopterin aldolase (folB).